A 427-amino-acid chain; its full sequence is Acyl-lipid 8-desaturase (427 aa).

The disordered stretch occupies residues 1–24 (MGRGGDSSGQAHPAAELAVPSDRA). A Cytochrome b5 heme-binding domain is found at 36–84 (IVLYGKRVDVTKFQRTHPGGSKVFRIFQDRDATEQFESYHSKRAIKMME). Residues H52 and H75 each coordinate heme. The short motif at 178–182 (HSVFK) is the Histidine box-1 element. Residues 189 to 209 (VGWNNAAGYFLGFVQGYAVEW) traverse the membrane as a helical segment. The Histidine box-2 signature appears at 213-218 (RHNTHH). The next 2 helical transmembrane spans lie at 261 to 281 (VPVMAILDLYWRLESIAYVAM) and 286 to 306 (MLPQALALVAHYAIVAWVFAG). Residues 373-377 (QTEHH) carry the Histidine box-3 motif.

The protein belongs to the fatty acid desaturase type 1 family. The cofactor is Fe(2+).

The protein localises to the membrane. Functionally, fatty acid desaturase that introduces a cis double bond at the 8-position in 20-carbon polyunsaturated fatty acids incorporated in a glycerolipid that contain a Delta(8) double bond to yield (20:4(8,11,14,17)). The chain is Acyl-lipid 8-desaturase from Rebecca salina (Marine microalga).